The chain runs to 326 residues: Ribonuclease H2 subunit A (326 aa).

The segment at M1–S47 is disordered. Positions S15–S47 are enriched in polar residues. Residues P63–K286 enclose the RNase H type-2 domain. 3 residues coordinate a divalent metal cation: D69, E70, and D180.

This sequence belongs to the RNase HII family. Eukaryotic subfamily. Requires Mn(2+) as cofactor. Mg(2+) is required as a cofactor.

The enzyme catalyses Endonucleolytic cleavage to 5'-phosphomonoester.. Its function is as follows. Endonuclease that specifically degrades the RNA of RNA-DNA hybrids. Participates in DNA replication. The protein is Ribonuclease H2 subunit A (rnh201) of Schizosaccharomyces pombe (strain 972 / ATCC 24843) (Fission yeast).